The primary structure comprises 570 residues: Putative pyruvate decarboxylase C3G9.11c (570 aa).

Pyruvate is bound by residues D30 and H119. Residues T396 and 419–421 each bind thiamine diphosphate; that span reads GSI. D451 provides a ligand contact to Mg(2+). Residues 452-453 and 478-483 each bind thiamine diphosphate; these read GS and NKGYTI. The Mg(2+) site is built by N478 and G480. E484 is a binding site for pyruvate.

It belongs to the TPP enzyme family. In terms of assembly, homotetramer. It depends on Mg(2+) as a cofactor. The cofactor is thiamine diphosphate.

It localises to the cytoplasm. The protein resides in the nucleus. The enzyme catalyses a 2-oxocarboxylate + H(+) = an aldehyde + CO2. It carries out the reaction pyruvate + H(+) = acetaldehyde + CO2. This chain is Putative pyruvate decarboxylase C3G9.11c, found in Schizosaccharomyces pombe (strain 972 / ATCC 24843) (Fission yeast).